We begin with the raw amino-acid sequence, 149 residues long: Small ribosomal subunit protein uS19 (149 aa).

It belongs to the universal ribosomal protein uS19 family.

Its function is as follows. Protein S19 forms a complex with S13 that binds strongly to the 16S ribosomal RNA. The sequence is that of Small ribosomal subunit protein uS19 from Methanopyrus kandleri (strain AV19 / DSM 6324 / JCM 9639 / NBRC 100938).